The sequence spans 201 residues: Anthranilate synthase component 2 (201 aa).

Positions 3–196 constitute a Glutamine amidotransferase type-1 domain; sequence NILFIDNFDS…IDWALSSTPA (194 aa). Residue 57–59 coordinates L-glutamine; sequence GPG. The active-site Nucleophile; for GATase activity is the C84. L-glutamine contacts are provided by residues Q88 and 134–135; that span reads SL. Active-site for GATase activity residues include H170 and E172.

In terms of assembly, heterotetramer consisting of two non-identical subunits: a beta subunit (TrpG) and a large alpha subunit (TrpE).

The enzyme catalyses chorismate + L-glutamine = anthranilate + pyruvate + L-glutamate + H(+). Its pathway is amino-acid biosynthesis; L-tryptophan biosynthesis; L-tryptophan from chorismate: step 1/5. Part of a heterotetrameric complex that catalyzes the two-step biosynthesis of anthranilate, an intermediate in the biosynthesis of L-tryptophan. In the first step, the glutamine-binding beta subunit (TrpG) of anthranilate synthase (AS) provides the glutamine amidotransferase activity which generates ammonia as a substrate that, along with chorismate, is used in the second step, catalyzed by the large alpha subunit of AS (TrpE) to produce anthranilate. In the absence of TrpG, TrpE can synthesize anthranilate directly from chorismate and high concentrations of ammonia. The protein is Anthranilate synthase component 2 (trpG) of Vibrio cholerae serotype O1 (strain ATCC 39315 / El Tor Inaba N16961).